The sequence spans 223 residues: Ribonuclease T (223 aa).

The region spanning 20 to 194 is the Exonuclease domain; that stretch reads VVIDVETAGF…YDTEQTALLF (175 aa). Mg(2+) contacts are provided by aspartate 23, glutamate 25, histidine 181, and aspartate 186. Catalysis depends on histidine 181, which acts as the Proton donor/acceptor.

The protein belongs to the RNase T family. Homodimer. Mg(2+) is required as a cofactor.

Its function is as follows. Trims short 3' overhangs of a variety of RNA species, leaving a one or two nucleotide 3' overhang. Responsible for the end-turnover of tRNA: specifically removes the terminal AMP residue from uncharged tRNA (tRNA-C-C-A). Also appears to be involved in tRNA biosynthesis. This chain is Ribonuclease T, found in Cronobacter sakazakii (strain ATCC BAA-894) (Enterobacter sakazakii).